The sequence spans 460 residues: MATGKIIQVIGAVVDVEFPQDAVPKVYNALEVEGAAEKLVLEVQQQLGGGVVRCIAMGSSDGLSRGLKVINLEHPIEVPVGKSTLGRIMNVLGDPIDMKGPIGEEERWAIHREAPSYEDLASSQDLLETGIKVMDLICPFAKGGKVGLFGGAGVGKTVNMMELIRNIAIEHSGYSVFAGVGERTREGNDFYHEMTDSNVLDKVSLVYGQMNEPPGNRLRVALTGLTMAEKFRDEGRDVLLFIDNIYRYTLAGTEVSALLGRMPSAVGYQPTLAEEMGVLQERITSTKTGSITSVQAVYVPADDLTDPSPATTFAHLDATVVLSRQIASLGIYPAVDPLDSTSRQLDPLVVGQEHYDVARGVQSILQRYQELKDIIAILGMDELSEDDKLVVSRARKIQRFLSQPFFVAEVFTGSPGKFVSLKDTIRGFKGIMNGDYDHLPEQAFYMVGTIEEAVEKAKKL.

150 to 157 (GGAGVGKT) contributes to the ATP binding site.

This sequence belongs to the ATPase alpha/beta chains family. F-type ATPases have 2 components, CF(1) - the catalytic core - and CF(0) - the membrane proton channel. CF(1) has five subunits: alpha(3), beta(3), gamma(1), delta(1), epsilon(1). CF(0) has three main subunits: a(1), b(2) and c(9-12). The alpha and beta chains form an alternating ring which encloses part of the gamma chain. CF(1) is attached to CF(0) by a central stalk formed by the gamma and epsilon chains, while a peripheral stalk is formed by the delta and b chains.

The protein localises to the cell inner membrane. It catalyses the reaction ATP + H2O + 4 H(+)(in) = ADP + phosphate + 5 H(+)(out). Produces ATP from ADP in the presence of a proton gradient across the membrane. The catalytic sites are hosted primarily by the beta subunits. This chain is ATP synthase subunit beta, found in Yersinia enterocolitica serotype O:8 / biotype 1B (strain NCTC 13174 / 8081).